We begin with the raw amino-acid sequence, 290 residues long: ATP synthase gamma chain (290 aa).

The protein belongs to the ATPase gamma chain family. In terms of assembly, F-type ATPases have 2 components, CF(1) - the catalytic core - and CF(0) - the membrane proton channel. CF(1) has five subunits: alpha(3), beta(3), gamma(1), delta(1), epsilon(1). CF(0) has three main subunits: a, b and c.

It localises to the cell inner membrane. Functionally, produces ATP from ADP in the presence of a proton gradient across the membrane. The gamma chain is believed to be important in regulating ATPase activity and the flow of protons through the CF(0) complex. The chain is ATP synthase gamma chain from Dictyoglomus turgidum (strain DSM 6724 / Z-1310).